A 508-amino-acid chain; its full sequence is Lysine--tRNA ligase (508 aa).

Mg(2+) is bound by residues glutamate 416 and glutamate 423.

It belongs to the class-II aminoacyl-tRNA synthetase family. In terms of assembly, homodimer. The cofactor is Mg(2+).

The protein localises to the cytoplasm. It catalyses the reaction tRNA(Lys) + L-lysine + ATP = L-lysyl-tRNA(Lys) + AMP + diphosphate. This is Lysine--tRNA ligase from Prochlorococcus marinus (strain MIT 9303).